A 144-amino-acid polypeptide reads, in one-letter code: Cell division protein SepF (144 aa).

Positions 21-38 (TDLQGTKTTDEVSPTSRP) are enriched in polar residues. The segment at 21–40 (TDLQGTKTTDEVSPTSRPDN) is disordered.

This sequence belongs to the SepF family. As to quaternary structure, homodimer. Interacts with FtsZ.

The protein resides in the cytoplasm. Its function is as follows. Cell division protein that is part of the divisome complex and is recruited early to the Z-ring. Probably stimulates Z-ring formation, perhaps through the cross-linking of FtsZ protofilaments. Its function overlaps with FtsA. This Latilactobacillus sakei subsp. sakei (strain 23K) (Lactobacillus sakei subsp. sakei) protein is Cell division protein SepF.